We begin with the raw amino-acid sequence, 380 residues long: Alpha-glucoside transport system permease protein AglG (380 aa).

The next 6 membrane-spanning stretches (helical) occupy residues 13-33 (VHLS…GLLI), 179-199 (VIPI…PFPG), 202-222 (VLLA…LIPL), 239-259 (TYMG…IYLL), 288-308 (IILP…FLWT), and 344-364 (EILT…FFAL). The 198-residue stretch at 167–364 (FLNSLTVAVP…VVPLIVFFAL (198 aa)) folds into the ABC transmembrane type-1 domain.

Belongs to the binding-protein-dependent transport system permease family. MalFG subfamily.

It localises to the cell inner membrane. In terms of biological role, part of the binding-protein-dependent transport system for alpha-glucosides such as sucrose, maltose and trehalose. Probably responsible for the translocation of the substrate across the membrane. In Rhizobium meliloti (strain 1021) (Ensifer meliloti), this protein is Alpha-glucoside transport system permease protein AglG (aglG).